We begin with the raw amino-acid sequence, 512 residues long: ATP synthase subunit alpha (512 aa).

Position 170 to 177 (170 to 177) interacts with ATP; sequence GDRQTGKT.

It belongs to the ATPase alpha/beta chains family. In terms of assembly, F-type ATPases have 2 components, CF(1) - the catalytic core - and CF(0) - the membrane proton channel. CF(1) has five subunits: alpha(3), beta(3), gamma(1), delta(1), epsilon(1). CF(0) has three main subunits: a(1), b(2) and c(9-12). The alpha and beta chains form an alternating ring which encloses part of the gamma chain. CF(1) is attached to CF(0) by a central stalk formed by the gamma and epsilon chains, while a peripheral stalk is formed by the delta and b chains.

The protein resides in the cell inner membrane. It catalyses the reaction ATP + H2O + 4 H(+)(in) = ADP + phosphate + 5 H(+)(out). In terms of biological role, produces ATP from ADP in the presence of a proton gradient across the membrane. The alpha chain is a regulatory subunit. This Solibacter usitatus (strain Ellin6076) protein is ATP synthase subunit alpha.